The chain runs to 332 residues: Pyrroline-5-carboxylate reductase (332 aa).

The protein belongs to the pyrroline-5-carboxylate reductase family.

The enzyme catalyses L-proline + NADP(+) = (S)-1-pyrroline-5-carboxylate + NADPH + 2 H(+). It catalyses the reaction L-proline + NAD(+) = (S)-1-pyrroline-5-carboxylate + NADH + 2 H(+). It participates in amino-acid biosynthesis; L-proline biosynthesis; L-proline from L-glutamate 5-semialdehyde: step 1/1. The polypeptide is Pyrroline-5-carboxylate reductase (pro-1) (Neurospora crassa (strain ATCC 24698 / 74-OR23-1A / CBS 708.71 / DSM 1257 / FGSC 987)).